A 93-amino-acid polypeptide reads, in one-letter code: Cobalt transport protein CbiN (93 aa).

2 consecutive transmembrane segments (helical) span residues 5–25 (LILL…NHGG) and 63–83 (LLFT…LGYA).

The protein belongs to the CbiN family. As to quaternary structure, forms an energy-coupling factor (ECF) transporter complex composed of an ATP-binding protein (A component, CbiO), a transmembrane protein (T component, CbiQ) and 2 possible substrate-capture proteins (S components, CbiM and CbiN) of unknown stoichimetry.

The protein localises to the cell inner membrane. It participates in cofactor biosynthesis; adenosylcobalamin biosynthesis. Part of the energy-coupling factor (ECF) transporter complex CbiMNOQ involved in cobalt import. This Klebsiella pneumoniae (strain 342) protein is Cobalt transport protein CbiN.